The sequence spans 47 residues: PhoP/PhoQ regulator MgrB (47 aa).

The helical transmembrane segment at 6–26 (WVILIIVALVCLLLWAQVFNI) threads the bilayer.

Belongs to the MgrB family. In terms of assembly, may form homooligomers. Probably interacts with the periplasmic domain of PhoQ.

It localises to the cell inner membrane. In terms of biological role, phoP-regulated transcription is redox-sensitive, being activated when the periplasm becomes more reducing. MgrB acts between DsbA/DsbB and PhoP/PhoQ in this pathway. Represses PhoP/PhoQ signaling, possibly by binding to the periplasmic domain of PhoQ, altering its activity and that of downstream effector PhoP. This is PhoP/PhoQ regulator MgrB from Citrobacter koseri (strain ATCC BAA-895 / CDC 4225-83 / SGSC4696).